Here is a 495-residue protein sequence, read N- to C-terminus: Glutamyl-tRNA(Gln) amidotransferase subunit A (495 aa).

Residues Lys-78 and Ser-159 each act as charge relay system in the active site. Residue Ser-183 is the Acyl-ester intermediate of the active site.

Belongs to the amidase family. GatA subfamily. As to quaternary structure, heterotrimer of A, B and C subunits.

It catalyses the reaction L-glutamyl-tRNA(Gln) + L-glutamine + ATP + H2O = L-glutaminyl-tRNA(Gln) + L-glutamate + ADP + phosphate + H(+). Functionally, allows the formation of correctly charged Gln-tRNA(Gln) through the transamidation of misacylated Glu-tRNA(Gln) in organisms which lack glutaminyl-tRNA synthetase. The reaction takes place in the presence of glutamine and ATP through an activated gamma-phospho-Glu-tRNA(Gln). This Rhizorhabdus wittichii (strain DSM 6014 / CCUG 31198 / JCM 15750 / NBRC 105917 / EY 4224 / RW1) (Sphingomonas wittichii) protein is Glutamyl-tRNA(Gln) amidotransferase subunit A.